Reading from the N-terminus, the 387-residue chain is Galactokinase (387 aa).

A substrate-binding site is contributed by 32–35; it reads EHTD. ATP contacts are provided by residues Ser-66 and 123-129; that span reads GAGLSSS. Mg(2+) contacts are provided by Ser-129 and Glu-161. Asp-173 serves as the catalytic Proton acceptor. Substrate is bound at residue Tyr-223.

Belongs to the GHMP kinase family. GalK subfamily.

The protein localises to the cytoplasm. The catalysed reaction is alpha-D-galactose + ATP = alpha-D-galactose 1-phosphate + ADP + H(+). Its pathway is carbohydrate metabolism; galactose metabolism. Functionally, catalyzes the transfer of the gamma-phosphate of ATP to D-galactose to form alpha-D-galactose-1-phosphate (Gal-1-P). This Enterococcus faecalis (strain ATCC 700802 / V583) protein is Galactokinase.